Consider the following 309-residue polypeptide: Taste receptor type 2 member 66 (309 aa).

Position 1 (Met1) is a topological domain, extracellular. Residues Ile2–Phe22 traverse the membrane as a helical segment. The Cytoplasmic portion of the chain corresponds to Ala23–Gln46. The helical transmembrane segment at Ile47–Tyr67 threads the bilayer. At Ala68–Asn86 the chain is on the extracellular side. Residues Leu87–Leu107 form a helical membrane-spanning segment. The Cytoplasmic portion of the chain corresponds to Leu108 to Lys126. A helical transmembrane segment spans residues Ser127 to Ile147. Over Asn148–Thr178 the chain is Extracellular. N-linked (GlcNAc...) asparagine glycosylation is found at Asn161 and Asn176. The chain crosses the membrane as a helical span at residues Val179–Val199. Residues Cys200–Gln229 lie on the Cytoplasmic side of the membrane. A helical transmembrane segment spans residues Thr230–Trp250. Topologically, residues Ser251 to Pro259 are extracellular. A helical transmembrane segment spans residues Val260 to Ile280. The Cytoplasmic portion of the chain corresponds to Trp281–Ser309.

The protein belongs to the G-protein coupled receptor T2R family.

The protein localises to the membrane. Receptor that may play a role in the perception of bitterness and is gustducin-linked. May play a role in sensing the chemical composition of the gastrointestinal content. The activity of this receptor may stimulate alpha gustducin, mediate PLC-beta-2 activation and lead to the gating of TRPM5. The chain is Taste receptor type 2 member 66 (TAS2R66) from Pan paniscus (Pygmy chimpanzee).